We begin with the raw amino-acid sequence, 321 residues long: Mas-related G-protein coupled receptor member B4 (321 aa).

Residues Met1–Asn33 are Extracellular-facing. Residues Asn11 and Asn16 are each glycosylated (N-linked (GlcNAc...) asparagine). The helical transmembrane segment at Phe34–Leu54 threads the bilayer. Residues Ala55–Ala62 are Cytoplasmic-facing. Residues Phe63–Val83 traverse the membrane as a helical segment. Over His84–Phe97 the chain is Extracellular. An N-linked (GlcNAc...) asparagine glycan is attached at Asn94. The helical transmembrane segment at Tyr98–Ile118 threads the bilayer. Over Ser119 to Ala146 the chain is Cytoplasmic. A helical membrane pass occupies residues Leu147–Phe167. The Extracellular portion of the chain corresponds to Ser168–Tyr172. The helical transmembrane segment at Tyr173 to Leu193 threads the bilayer. Residues Ser194 to Arg215 are Cytoplasmic-facing. The chain crosses the membrane as a helical span at residues Phe216–Ile236. At Cys237–Glu257 the chain is on the extracellular side. Residues Ile258–Gly278 form a helical membrane-spanning segment. Over Ser279–Val321 the chain is Cytoplasmic. Residues Gln299–Val321 are disordered.

This sequence belongs to the G-protein coupled receptor 1 family. Mas subfamily.

Its subcellular location is the membrane. Functionally, orphan receptor. Probably involved in the function of nociceptive neurons. May regulate nociceptor function and/or development, including the sensation or modulation of pain. The chain is Mas-related G-protein coupled receptor member B4 (Mrgprb4) from Mus musculus (Mouse).